Here is a 1894-residue protein sequence, read N- to C-terminus: Plexin-A1 (1894 aa).

Positions 1 to 27 (MPLPPLSSRTLLLLLLLLLRGVWIAIS) are cleaved as a signal peptide. The 483-residue stretch at 28-510 (SPPAGLGPQP…TEKQVTQVPV (483 aa)) folds into the Sema domain. The Extracellular portion of the chain corresponds to 28-1242 (SPPAGLGPQP…VYSDSLLTLP (1215 aa)). A glycan (N-linked (GlcNAc...) asparagine) is linked at Asn-75. Intrachain disulfides connect Cys-93/Cys-102, Cys-128/Cys-136, Cys-284/Cys-405, Cys-300/Cys-356, Cys-374/Cys-393, Cys-513/Cys-530, Cys-519/Cys-561, Cys-522/Cys-539, Cys-533/Cys-545, and Cys-596/Cys-615. 3 N-linked (GlcNAc...) asparagine glycosylation sites follow: Asn-658, Asn-670, and Asn-699. IPT/TIG domains are found at residues 862-957 (PKIL…FTFV), 959-1043 (PTFY…YNYT), 1046-1145 (PTIL…FLYY), and 1148-1234 (PVLE…LQVY). Asn-1041 carries an N-linked (GlcNAc...) asparagine glycan. Asn-1185 and Asn-1210 each carry an N-linked (GlcNAc...) asparagine glycan. A helical membrane pass occupies residues 1243-1263 (AIVGIGGGGGLLLLVIVAVLI). The stretch at 1262 to 1315 (LIAYKRKSRDADRTLKRLQLQMDNLESRVALECKEAFAELQTDIHELTSDLDGA) forms a coiled coil. The Cytoplasmic segment spans residues 1264–1894 (AYKRKSRDAD…QVVDTMALSS (631 aa)).

The protein belongs to the plexin family. As to quaternary structure, interacts directly with NRP1 and NRP2. Interacts with PLXN1B. Interacts with FARP2, RND1 and KDR/VEGFR2. Binding of SEMA3A leads to dissociation of FARP2. Interacts with CRMP1, DPYSL2/CRMP2, DPYSL3/CRMP3 and DPYSL4/CRMP4. Interacts (via TIG domains) with TREM2; the interaction mediates SEMA6D binding and signaling through TYROBP. In terms of tissue distribution, ubiquitous.

It localises to the cell membrane. Coreceptor for SEMA3A, SEMA3C, SEMA3F and SEMA6D. Necessary for signaling by class 3 semaphorins and subsequent remodeling of the cytoskeleton. Plays a role in axon guidance, invasive growth and cell migration. Class 3 semaphorins bind to a complex composed of a neuropilin and a plexin. The plexin modulates the affinity of the complex for specific semaphorins, and its cytoplasmic domain is required for the activation of down-stream signaling events in the cytoplasm. Acts as coreceptor of TREM2 for SEMA6D in dendritic cells and is involved in the generation of immune responses and skeletal homeostasis. The protein is Plexin-A1 (Plxna1) of Mus musculus (Mouse).